We begin with the raw amino-acid sequence, 190 residues long: Pyridoxal 5'-phosphate synthase subunit PdxT (190 aa).

Position 46 to 48 (46 to 48 (GES)) interacts with L-glutamine. The active-site Nucleophile is the cysteine 78. Residues arginine 106 and 135–136 (IR) each bind L-glutamine. Catalysis depends on charge relay system residues histidine 171 and glutamate 173.

This sequence belongs to the glutaminase PdxT/SNO family. As to quaternary structure, in the presence of PdxS, forms a dodecamer of heterodimers. Only shows activity in the heterodimer.

The catalysed reaction is aldehydo-D-ribose 5-phosphate + D-glyceraldehyde 3-phosphate + L-glutamine = pyridoxal 5'-phosphate + L-glutamate + phosphate + 3 H2O + H(+). The enzyme catalyses L-glutamine + H2O = L-glutamate + NH4(+). It participates in cofactor biosynthesis; pyridoxal 5'-phosphate biosynthesis. Functionally, catalyzes the hydrolysis of glutamine to glutamate and ammonia as part of the biosynthesis of pyridoxal 5'-phosphate. The resulting ammonia molecule is channeled to the active site of PdxS. This is Pyridoxal 5'-phosphate synthase subunit PdxT from Dictyoglomus turgidum (strain DSM 6724 / Z-1310).